A 161-amino-acid chain; its full sequence is Low molecular weight phosphotyrosine protein phosphatase (161 aa).

The Nucleophile role is filled by Cys14. Arg20 (transition state stabilizer) is an active-site residue. Phosphoserine is present on Ser57. Asp133 (proton donor) is an active-site residue.

The protein belongs to the low molecular weight phosphotyrosine protein phosphatase family.

It is found in the cytoplasm. It catalyses the reaction O-phospho-L-tyrosyl-[protein] + H2O = L-tyrosyl-[protein] + phosphate. The catalysed reaction is a phosphate monoester + H2O = an alcohol + phosphate. Functionally, acts on tyrosine phosphorylated proteins, low-MW aryl phosphates and natural and synthetic acyl phosphates. The sequence is that of Low molecular weight phosphotyrosine protein phosphatase from Saccharomyces cerevisiae (strain ATCC 204508 / S288c) (Baker's yeast).